Reading from the N-terminus, the 510-residue chain is GPI mannosyltransferase 4 (510 aa).

3 helical membrane passes run 7–27, 62–82, and 89–109; these read LILA…SYIH, FVPL…LWKG, and AYWF…DMAL. An N-linked (GlcNAc...) asparagine glycan is attached at asparagine 142. The chain crosses the membrane as a helical span at residues 179 to 199; it reads LGLLIVIGTWNRVTFPLWLIV. The N-linked (GlcNAc...) asparagine glycan is linked to asparagine 212. The next 3 helical transmembrane spans lie at 213 to 233, 268 to 288, and 339 to 359; these read ISSL…VIHV, LTHL…LLRT, and FTSA…FLMG.

The protein belongs to the glycosyltransferase 22 family. PIGZ subfamily.

It is found in the endoplasmic reticulum membrane. It participates in glycolipid biosynthesis; glycosylphosphatidylinositol-anchor biosynthesis. Alpha-1,2-mannosyltransferase involved in glycosylphosphatidylinositol-anchor biosynthesis. Transfers a fourth mannose to trimannosyl-GPIs during GPI precursor assembly. The presence of a fourth mannose in GPI is essential in fungi. The protein is GPI mannosyltransferase 4 (SMP3) of Yarrowia lipolytica (strain CLIB 122 / E 150) (Yeast).